The primary structure comprises 356 residues: Dynein axonemal heavy chain 12 (356 aa).

ANK repeat units lie at residues Asp-17–Val-46, Ser-50–Arg-81, Ser-82–Phe-111, His-124–Gln-153, Asp-154–Tyr-183, and Cys-185–Leu-218. The region spanning Trp-290–Asp-345 is the SOCS box domain.

Belongs to the dynein heavy chain family. As to quaternary structure, consists of at least two heavy chains and a number of intermediate and light chains.

The protein localises to the cytoplasm. It is found in the cytoskeleton. Its subcellular location is the cilium axoneme. It functions in the pathway protein modification; protein ubiquitination. Force generating protein of respiratory cilia. Produces force towards the minus ends of microtubules. Dynein has ATPase activity; the force-producing power stroke is thought to occur on release of ADP. Involved in sperm motility; implicated in sperm flagellar assembly. In terms of biological role, may be a substrate-recognition component of a SCF-like ECS (Elongin-Cullin-SOCS-box protein) E3 ubiquitin-protein ligase complex which mediates the ubiquitination and subsequent proteasomal degradation of target proteins. In Bos taurus (Bovine), this protein is Dynein axonemal heavy chain 12 (DNAH12).